Reading from the N-terminus, the 252-residue chain is Trans-aconitate 2-methyltransferase (252 aa).

It belongs to the methyltransferase superfamily. Tam family.

The protein localises to the cytoplasm. It catalyses the reaction trans-aconitate + S-adenosyl-L-methionine = (E)-3-(methoxycarbonyl)pent-2-enedioate + S-adenosyl-L-homocysteine. Catalyzes the S-adenosylmethionine monomethyl esterification of trans-aconitate. The polypeptide is Trans-aconitate 2-methyltransferase (Escherichia coli O6:K15:H31 (strain 536 / UPEC)).